Here is a 474-residue protein sequence, read N- to C-terminus: MAPAALWVALVVELQLWATGHTVPAKVVLTPYKPEPGNQCQISQEYYDKKAQMCCAKCPPGQYAKHFCNKTSDTVCADCAAGMFTQVWNHLHTCLSCSSSCSDDQVETHNCTKKQNRVCACNADSYCALKLHSGNCRQCMKLSKCGPGFGVARSRTSNGNVICSACAPGTFSDTTSSTDVCRPHRICSILAIPGNASTDAVCASESPTPSAVPRTIYVSQPEPTRSQPMDQEPGPSQTPHIPVSLGSTPIIEPSITGGISLPIGLIVGLTTLGLLMLGLANCFILVQRKKKPSCLQRETMVPHLPDDKSQDAIGLEQQHLLTTAPSSSSSSLESSASAGDRRAPPGGHPQARVTAEAQGSQEACAGSRSSDSSHGSHGTHVNVTCIVNVCSSSDHSSQCSSQASTTVGDPDANPSGSPKDEQVPFSQEECPSQSQWETTETLQNHDKPFPLGVPDVGMKPNQPGWYDQIAVKVP.

Residues 1 to 22 (MAPAALWVALVVELQLWATGHT) form the signal peptide. Over 23 to 258 (VPAKVVLTPY…PIIEPSITGG (236 aa)) the chain is Extracellular. A glycan (O-linked (GalNAc...) threonine) is linked at Thr-30. 4 TNFR-Cys repeats span residues 39-77 (QCQI…TVCA), 78-119 (DCAA…NRVC), 120-164 (ACNA…VICS), and 165-203 (ACAP…AVCA). Cystine bridges form between Cys-40–Cys-54, Cys-55–Cys-68, Cys-58–Cys-76, Cys-79–Cys-94, Cys-97–Cys-111, Cys-101–Cys-119, Cys-121–Cys-127, Cys-136–Cys-145, Cys-139–Cys-163, and Cys-166–Cys-181. An N-linked (GlcNAc...) asparagine glycan is attached at Asn-69. A glycan (N-linked (GlcNAc...) asparagine) is linked at Asn-110. N-linked (GlcNAc...) asparagine glycosylation occurs at Asn-195. O-linked (GalNAc...) threonine glycosylation is found at Thr-208 and Thr-224. Over residues 220 to 239 (QPEPTRSQPMDQEPGPSQTP) the composition is skewed to polar residues. The segment at 220–241 (QPEPTRSQPMDQEPGPSQTPHI) is disordered. A helical membrane pass occupies residues 259–288 (ISLPIGLIVGLTTLGLLMLGLANCFILVQR). Residues 289–474 (KKKPSCLQRE…WYDQIAVKVP (186 aa)) lie on the Cytoplasmic side of the membrane. Disordered stretches follow at residues 321 to 378 (LTTA…GSHG) and 397 to 464 (SQCS…NQPG). Low complexity-rich tracts occupy residues 324–338 (APSS…SASA) and 366–378 (GSRS…GSHG). At Ser-331 the chain carries Phosphoserine. The segment covering 429-442 (ECPSQSQWETTETL) has biased composition (polar residues).

In terms of assembly, binds to TRAF2. Interacts with BMX. Interacts (activated form) with XPNPEP3.

The protein resides in the membrane. Receptor with high affinity for TNFSF2/TNF-alpha and approximately 5-fold lower affinity for homotrimeric TNFSF1/lymphotoxin-alpha. The TRAF1/TRAF2 complex recruits the apoptotic suppressors BIRC2 and BIRC3 to TNFRSF1B/TNFR2. This Rattus norvegicus (Rat) protein is Tumor necrosis factor receptor superfamily member 1B (Tnfrsf1b).